Consider the following 423-residue polypeptide: GPI mannosyltransferase 2 (423 aa).

Helical transmembrane passes span 11–31 (ILSLTSIFAAWKSFLLAIALG), 106–126 (WEALVAIAISHVSHLVAVLAL), 139–159 (LAYLASVVHVLSPAGLFISAP), 160–180 (YAESPFACMSFVGNLLYAISL), 197–219 (GLSYGISCTLRSNGLFGGVLFAV), 240–260 (LVAPLIGGILVAVGFVAPQVL), 299–319 (YWTPNQIPLFLLAAPMLTILL), 351–371 (LAAIQTLLAVLAITNYHVQII), and 400–420 (GVIVFITMYAAIQGGLFASFL).

Belongs to the PIGV family.

It is found in the endoplasmic reticulum membrane. Its pathway is glycolipid biosynthesis; glycosylphosphatidylinositol-anchor biosynthesis. Functionally, mannosyltransferase involved in glycosylphosphatidylinositol-anchor biosynthesis. Transfers the second mannose to the glycosylphosphatidylinositol during GPI precursor assembly. The protein is GPI mannosyltransferase 2 (GPI18) of Gibberella zeae (strain ATCC MYA-4620 / CBS 123657 / FGSC 9075 / NRRL 31084 / PH-1) (Wheat head blight fungus).